Here is a 702-residue protein sequence, read N- to C-terminus: Capsid vertex component 1 (702 aa).

Residues 200–244 (MGESGTPTPQASSVSGGAGPAVVGTPDPPISPEEQLTAPGGDTAT) form a disordered region. The segment covering 210-224 (ASSVSGGAGPAVVGT) has biased composition (low complexity).

The protein belongs to the herpesviridae CVC1 protein family. In terms of assembly, interacts (via C-terminus) with capsid vertex component 2/CVC2.

Its subcellular location is the virion. It is found in the host nucleus. Capsid vertex-specific component that plays a role during viral DNA encapsidation, assuring correct genome cleavage and presumably stabilizing capsids that contain full-length viral genomes. In Homo sapiens (Human), this protein is Capsid vertex component 1.